Here is an 83-residue protein sequence, read N- to C-terminus: Putative membrane protein insertion efficiency factor (83 aa).

The tract at residues 63 to 83 (GGNDPVPDHFSLRRNKTDISD) is disordered. Over residues 68–83 (VPDHFSLRRNKTDISD) the composition is skewed to basic and acidic residues.

Belongs to the UPF0161 family.

The protein resides in the cell membrane. Functionally, could be involved in insertion of integral membrane proteins into the membrane. The chain is Putative membrane protein insertion efficiency factor from Streptococcus agalactiae serotype Ia (strain ATCC 27591 / A909 / CDC SS700).